The sequence spans 666 residues: ATP synthase subunit alpha 2 (666 aa).

Position 182–189 (182–189 (GDRATGKT)) interacts with ATP. The interval 527–666 (MPAEDAAGDI…DAEAEARHKR (140 aa)) is disordered. Residues 545–590 (ARGDADRDADHGANREVSREVSPEASREVSREVSCEVSHEADRDAA) show a composition bias toward basic and acidic residues. Over residues 591–601 (ADAARVAGRAP) the composition is skewed to low complexity. The span at 623–641 (ADGDRASASRPRPDARGDA) shows a compositional bias: basic and acidic residues.

Belongs to the ATPase alpha/beta chains family. As to quaternary structure, F-type ATPases have 2 components, CF(1) - the catalytic core - and CF(0) - the membrane proton channel. CF(1) has five subunits: alpha(3), beta(3), gamma(1), delta(1), epsilon(1). CF(0) has three main subunits: a(1), b(2) and c(9-12). The alpha and beta chains form an alternating ring which encloses part of the gamma chain. CF(1) is attached to CF(0) by a central stalk formed by the gamma and epsilon chains, while a peripheral stalk is formed by the delta and b chains.

The protein resides in the cell inner membrane. It carries out the reaction ATP + H2O + 4 H(+)(in) = ADP + phosphate + 5 H(+)(out). Produces ATP from ADP in the presence of a proton gradient across the membrane. The alpha chain is a regulatory subunit. This is ATP synthase subunit alpha 2 from Burkholderia pseudomallei (strain 1106a).